The primary structure comprises 314 residues: Coproporphyrin III ferrochelatase (314 aa).

His186 and Glu268 together coordinate Fe(2+).

It belongs to the ferrochelatase family.

The protein resides in the cytoplasm. The catalysed reaction is Fe-coproporphyrin III + 2 H(+) = coproporphyrin III + Fe(2+). It participates in porphyrin-containing compound metabolism; protoheme biosynthesis. Involved in coproporphyrin-dependent heme b biosynthesis. Catalyzes the insertion of ferrous iron into coproporphyrin III to form Fe-coproporphyrin III. The chain is Coproporphyrin III ferrochelatase from Lactococcus lactis subsp. lactis (strain IL1403) (Streptococcus lactis).